Reading from the N-terminus, the 354-residue chain is Interferon-inducible protein AIM2 (354 aa).

The Pyrin domain occupies 1 to 87 (MESEYREMLL…ANALEEKKKE (87 aa)). The segment at 95 to 124 (NTKKRGTQKVENRSQAENCSAASATRSDND) is disordered. Residues 109-120 (QAENCSAASATR) are compositionally biased toward polar residues. Residues 144–341 (MVAEQEAIRE…SGPCSFFKVI (198 aa)) enclose the HIN-200 domain.

It belongs to the HIN-200 family. Self-associates; forms homooligomers in response to cytosolic double-stranded DNA (dsDNA) and the dsDNA seems to serve as oligomerization platform. Component of AIM2 inflammasome, which consists of a signal sensor component (AIM2), an adapter (PYCARD/ASC), which recruits an effector pro-inflammatory caspase (CASP1). Interacts (via pyrin domain) with PYCARD/ASC (via pyrin domain); interaction is direct. Component of the AIM2 PANoptosome complex, a multiprotein complex that drives inflammatory cell death (PANoptosis). Interacts with EIF2AK2/PKR. Interacts with MAPRE1. Interacts (via HIN-200 domain) with IFI202 (via HIN-200 domain 2); preventing activation of the AIM2 inflammasome. Interacts with RACK1; promoting association with PP2A phosphatase and dephosphorylation of AKT1. Interacts with TRIM11; promoting AIM2 recruitment to autophagosomes and autophagy-dependent degradation. Degraded via selective autophagy following interaction with TRIM11. As to expression, expressed in developing neurons. Highly expressed in regulatory T-cells (Treg).

It localises to the cytoplasm. It is found in the inflammasome. Its subcellular location is the nucleus. Inactive in absence of double-stranded DNA (dsDNA). Homooligomerizes upon binding to dsDNA, dsDNA serving as an oligomerization platform. AIM2 requires large dsDNA to generate a structural template that couples dsDNA ligand-binding and homooligomerization. Homooligomerization is followed by recruitment of PYCARD/ASC to initiate speck formation (nucleation). AIM2 and PYCARD/ASC homooligomer filaments assemble bidirectionally and the recognition between AIM2 and PYCARD/ASC oligomers occurs in a head-to-tail manner. Clustered PYCARD/ASC nucleates the formation of CASP1 filaments through the interaction of their respective CARD domains, acting as a platform for CASP1 polymerization and activation. Active CASP1 then specifically processes protein precursors, such as gasdermin-D (GSDMD), IL1B and IL18, leading to the release of mature cytokines in the extracellular milieu or pyroptosis, depending on cell type. AIM2 can be activated in response to events that cause genomic DNA (HIV protease inhibitor nelfinavir) or mitochondrial DNA release in the cytoplasm (such as Perfluoroalkyl substance pollutants or cholesterol overload). Activation of the AIM2 inflammasome is inhibited by IFI202. Activation of the AIM2 inflammasome is inhibited by TRIM11, which promotes autophagy-dependent degradation of AIM2. Functionally, sensor component of the AIM2 inflammasome, which mediates inflammasome activation in response to the presence of double-stranded DNA (dsDNA) in the cytosol, leading to subsequent pyroptosis. Inflammasomes are supramolecular complexes that assemble in the cytosol in response to pathogens and other damage-associated signals and play critical roles in innate immunity and inflammation. Acts as a recognition receptor (PRR): specifically recognizes and binds dsDNA in the cytosol, and mediates the formation of the inflammasome polymeric complex composed of AIM2, CASP1 and PYCARD/ASC. Recruitment of pro-caspase-1 (proCASP1) to the AIM2 inflammasome promotes caspase-1 (CASP1) activation, which subsequently cleaves and activates inflammatory cytokines IL1B and IL18 and gasdermin-D (GSDMD), promoting cytokine secretion. In some cells, CASP1 activation mediates cleavage and activation of GSDMD, triggering pyroptosis without promoting cytokine secretion. Detects cytosolic dsDNA of viral and bacterial origin in a non-sequence-specific manner. Involved in the DNA damage response caused by acute ionizing radiation by mediating pyroptosis of intestinal epithelial cells and bone marrow cells in response to double-strand DNA breaks. Mechanistically, AIM2 senses DNA damage in the nucleus to mediate inflammasome assembly and inflammatory cell death. Also acts as a regulator of neurodevelopment via its role in the DNA damage response: acts by promoting neural cell death in response to DNA damage in the developing brain, thereby purging genetically compromised cells of the central nervous system. Pyroptosis mediated by the AIM2 inflammasome in response to DNA damage is dependent on GSDMD without involving IL1B and IL18 cytokine secretion. Also acts as a mediator of pyroptosis, necroptosis and apoptosis (PANoptosis), an integral part of host defense against pathogens, in response to bacterial infection. Can also trigger PYCARD/ASC-dependent, caspase-1-independent cell death that involves caspase-8 (CASP8). Its function is as follows. Also acts as a tumor suppressor independently of its role in inflammatory response. Able to suppress overt cell proliferation in enterocytes: restricts stem cell proliferation in the intestinal mucosa in an inflammasome-independent manner, contributing to a decrease in the likelihood of colorectal cancer development. AIM2 suppresses cell proliferation by inhibiting phosphorylation of AKT1 at 'Ser-473', preventing AKT1 activation and AKT-mTOR signaling pathway. Inhibits AKT1 phosphorylation both by inhibiting the activity of PRKDC/DNA-PK kinase and promoting dephosphorylation by PP2A phosphatase. Also acts as a key regulator of regulatory T-cells (Treg) homeostasis by promoting their stability: acts by preventing AKT1 activation. Its role in Treg homeostasis is important to restain autoimmune diseases. The chain is Interferon-inducible protein AIM2 from Mus musculus (Mouse).